The chain runs to 280 residues: Putative pyruvate, phosphate dikinase regulatory protein (280 aa).

ADP is bound at residue 152–159 (GISRTSKT).

The protein belongs to the pyruvate, phosphate/water dikinase regulatory protein family. PDRP subfamily.

The catalysed reaction is N(tele)-phospho-L-histidyl/L-threonyl-[pyruvate, phosphate dikinase] + ADP = N(tele)-phospho-L-histidyl/O-phospho-L-threonyl-[pyruvate, phosphate dikinase] + AMP + H(+). It catalyses the reaction N(tele)-phospho-L-histidyl/O-phospho-L-threonyl-[pyruvate, phosphate dikinase] + phosphate + H(+) = N(tele)-phospho-L-histidyl/L-threonyl-[pyruvate, phosphate dikinase] + diphosphate. Its function is as follows. Bifunctional serine/threonine kinase and phosphorylase involved in the regulation of the pyruvate, phosphate dikinase (PPDK) by catalyzing its phosphorylation/dephosphorylation. This chain is Putative pyruvate, phosphate dikinase regulatory protein, found in Clostridioides difficile (strain 630) (Peptoclostridium difficile).